Consider the following 313-residue polypeptide: Formate-nitrite transporter (313 aa).

Topologically, residues 1–47 (MPKSNTKYVIDPLSVKTSCSSEESYIRCVEYGKSKAHYSSLILLAKA) are cytoplasmic. A helical transmembrane segment spans residues 48–68 (ILAGVFVGVCAHASGIAGGLF). The Extracellular segment spans residues 69–77 (YYHKLREYV). Residues 78-98 (GASMSAFVYGFTFPIAFLCII) traverse the membrane as a helical segment. Over 99–128 (CTGSDLFTGNTLAVTTALLHGKVSCLEYVR) the chain is Cytoplasmic. Residues 129 to 149 (VMCISLFGNYVGAVSFAFFVS) form a helical membrane-spanning segment. The Extracellular segment spans residues 150–185 (YGSGAFHKKEQVDKNHIFQFLNDIAVKKVNHTFVEC). N-linked (GlcNAc...) asparagine glycosylation occurs at Asn-179. The chain crosses the membrane as a helical span at residues 186–206 (ICLAIGCNIFVCLAVYFVLSI). Topologically, residues 207 to 211 (KDGSG) are cytoplasmic. The chain crosses the membrane as a helical span at residues 212–232 (MVFSVFFAVYAFAIAGYEHII). Topologically, residues 233–260 (ANIYTLNISLMIDTEVSFTQVYFKNLLP) are extracellular. Asn-239 carries an N-linked (GlcNAc...) asparagine glycan. A helical membrane pass occupies residues 261–281 (TLIGNYIAGALVLACPLFFIY). Over 282–313 (RSYYINYEKMNEPSGGSLRSISIEMKNDGGAT) the chain is Cytoplasmic.

This sequence belongs to the FNT transporter (TC 1.A.16) family. As to quaternary structure, homopentamer.

It is found in the cell membrane. Its subcellular location is the vacuole membrane. The catalysed reaction is (S)-lactate(in) + H(+)(in) = (S)-lactate(out) + H(+)(out). The enzyme catalyses formate(in) + H(+)(in) = formate(out) + H(+)(out). It carries out the reaction pyruvate(out) + H(+)(out) = pyruvate(in) + H(+)(in). It catalyses the reaction acetate(out) + H(+)(out) = acetate(in) + H(+)(in). Its activity is regulated as follows. Inhibited by the Malaria Box compound MMV007839 and its derivatives BH296 and BH267.meta. Functionally, monocarboxylate-proton symporter that mediates the efflux of the waste product lactate in the intraerythrocytic parasites; active in acidic-to-neutral pH range. Transports L-lactate. The chain is Formate-nitrite transporter from Plasmodium ovale.